A 290-amino-acid chain; its full sequence is 3-hydroxyacyl-thioester dehydratase Y (290 aa).

A disordered region spans residues 147–169 (FGGARGERPAAPEFPDRHPDARI). Basic and acidic residues predominate over residues 151-169 (RGERPAAPEFPDRHPDARI). A MaoC-like domain is found at 161-271 (PDRHPDARID…AVFRTEVAGS (111 aa)).

It belongs to the enoyl-CoA hydratase/isomerase family.

The enzyme catalyses a (3R)-3-hydroxyacyl-CoA = a (2E)-enoyl-CoA + H2O. It carries out the reaction (3R)-hydroxyhexanoyl-CoA = (2E)-hexenoyl-CoA + H2O. It catalyses the reaction (2E)-octenoyl-CoA + H2O = (3R)-hydroxyoctanoyl-CoA. The catalysed reaction is (3R)-3-hydroxydecanoyl-CoA = (2E)-decenoyl-CoA + H2O. The enzyme catalyses (3R)-3-hydroxydodecanoyl-CoA = (2E)-dodecenoyl-CoA + H2O. It carries out the reaction (3R)-hydroxyhexadecanoyl-CoA = (2E)-hexadecenoyl-CoA + H2O. Functionally, shows trans-enoyl-CoA hydratase/3-hydroxyacyl-CoA dehydratase activity. In vitro, can hydrate various enoyl-CoA such as (2E)-hexenoyl-CoA, (2E)-octenoyl-CoA, (2E)-decenoyl-CoA, (2E)-dodecenoyl-CoA and (2E)-hexadecenoyl-CoA. May contribute to the persistence of the tuberculosis infection by inducing COX-2 expression in macrophages through MAPK-NF-kappaB signaling pathway. This chain is 3-hydroxyacyl-thioester dehydratase Y, found in Mycobacterium tuberculosis (strain ATCC 25618 / H37Rv).